The following is a 607-amino-acid chain: UvrABC system protein C (607 aa).

The region spanning 11–89 (CKPGVYRFED…IKEFAPPCNV (79 aa)) is the GIY-YIG domain. The UVR domain maps to 201-236 (SSLLESLKKKMLKASKNKEYEEAAILRDKIQAAQTV).

It belongs to the UvrC family. As to quaternary structure, interacts with UvrB in an incision complex.

The protein localises to the cytoplasm. The UvrABC repair system catalyzes the recognition and processing of DNA lesions. UvrC both incises the 5' and 3' sides of the lesion. The N-terminal half is responsible for the 3' incision and the C-terminal half is responsible for the 5' incision. This is UvrABC system protein C from Tropheryma whipplei (strain TW08/27) (Whipple's bacillus).